A 654-amino-acid polypeptide reads, in one-letter code: MLLKKHAGKGGGREPRSEDPTPAEQHCARTMPPCAVLAALLSVVAVVSCLYLGVKTNDLQARIAALESAKGAPSIHLLPDTLDHLKTMVQEKVERLLAQKSYEHMAKIRIAREAPSECNCPAGPPGKRGKRGRRGESGPPGQPGPQGPPGPKGDKGEQGDQGPRMVFPKINHGFLSADQQLIKRRLIKGDQGQAGPPGPPGPPGPRGPPGDTGKDGPRGMPGVPGEPGKPGEQGLMGPLGPPGQKGSIGAPGIPGMNGQKGEPGLPGAVGQNGIPGPKGEPGEQGEKGDAGENGPKGDTGEKGDPGSSAAGIKGEPGESGRPGQKGEPGLPGLPGLPGIKGEPGFIGPQGEPGLPGLPGTKGERGEAGPPGRGERGEPGAPGPKGKQGESGTRGPKGSKGDRGEKGDSGAQGPRGPPGQKGDQGATEIIDYNGNLHEALQRITTLTVTGPPGPPGPQGLQGPKGEQGSPGIPGMDGEQGLKGSKGDMGDPGMTGEKGGIGLPGLPGANGMKGEKGDSGMPGPQGPSIIGPPGPPGPHGPPGPMGPHGLPGPKGTDGPMGPHGPAGPKGERGEKGAMGEPGPRGPYGLPGKDGEPGLDGFPGPRGEKGDLGEKGEKGFRGVKGEKGEPGQPGLDGLDAPCQLGPDGLPMPGCWQK.

The tract at residues 1-26 (MLLKKHAGKGGGREPRSEDPTPAEQH) is disordered. The Cytoplasmic portion of the chain corresponds to 1–33 (MLLKKHAGKGGGREPRSEDPTPAEQHCARTMPP). Residues 34-54 (CAVLAALLSVVAVVSCLYLGV) traverse the membrane as a helical; Signal-anchor for type II membrane protein segment. Topologically, residues 55–654 (KTNDLQARIA…GLPMPGCWQK (600 aa)) are extracellular. A Pyrrolidone carboxylic acid (Glu) modification is found at E113. Residues 116–168 (SECNCPAGPPGKRGKRGRRGESGPPGQPGPQGPPGPKGDKGEQGDQGPRMVFP) are disordered. In terms of domain architecture, Collagen-like 1 spans 121-164 (PAGPPGKRGKRGRRGESGPPGQPGPQGPPGPKGDKGEQGDQGPR). Residues 140-151 (PGQPGPQGPPGP) are compositionally biased toward pro residues. The segment at 181–188 (LIKRRLIK) is interaction with amyloid-beta peptide. Disordered stretches follow at residues 189–426 (GDQG…QGAT) and 445–654 (LTVT…CWQK). Collagen-like domains are found at residues 192-247 (GQAG…QKGS), 249-308 (GAPG…PGSS), 311-370 (GIKG…AGPP), 372-425 (RGER…DQGA), and 447-505 (VTGP…PGLP). Residues 196–208 (PPGPPGPPGPRGP) are compositionally biased toward pro residues. Over residues 230-245 (PGEQGLMGPLGPPGQK) the composition is skewed to low complexity. Residues 280 to 290 (EPGEQGEKGDA) show a composition bias toward basic and acidic residues. Low complexity predominate over residues 336–358 (LPGIKGEPGFIGPQGEPGLPGLP). Composition is skewed to basic and acidic residues over residues 361-377 (KGER…ERGE) and 398-407 (SKGDRGEKGD). Residues 457-466 (QGLQGPKGEQ) are compositionally biased toward low complexity. Gly residues predominate over residues 494–503 (GEKGGIGLPG). Residues 517 to 527 (SGMPGPQGPSI) are compositionally biased toward low complexity. Pro residues predominate over residues 528 to 543 (IGPPGPPGPHGPPGPM). A Collagen-like 7 domain is found at 571–630 (GEKGAMGEPGPRGPYGLPGKDGEPGLDGFPGPRGEKGDLGEKGEKGFRGVKGEKGEPGQP). The span at 603–626 (RGEKGDLGEKGEKGFRGVKGEKGE) shows a compositional bias: basic and acidic residues.

In terms of assembly, forms homodimers and homotrimers. Binds to the fibrillized forms of amyloid-beta protein 40 (beta-APP40) and amyloid-beta protein 42 (beta-APP42). Found associated with beta-APP42 more frequently than with beta-APP40. Undergoes proteolytic cleavage by furin protease to yield the soluble collagen-like Alzheimer amyloid plaque component. Post-translationally, glycosylated. In terms of processing, hydroxylated on 11% of proline residues and 49% of lysine residues. As to expression, expressed predominantly in brain. Deposited preferentially in primitive or neuritic amyloid plaques which are typical of Alzheimer disease.

It localises to the membrane. In terms of biological role, inhibits fibrillization of amyloid-beta peptide during the elongation phase. Has also been shown to assemble amyloid fibrils into protease-resistant aggregates. Binds heparin. In Homo sapiens (Human), this protein is Collagen alpha-1(XXV) chain.